A 345-amino-acid polypeptide reads, in one-letter code: 3'-5' exoribonuclease 1 (345 aa).

Basic and acidic residues-rich tracts occupy residues 1–11 (MEDERGRERGG) and 19–46 (PRPE…ETDG). The disordered stretch occupies residues 1 to 50 (MEDERGRERGGDAAQQKTPRPECEESRPLSVEKKQRCRLDGKETDGSKFI). Phosphoserine is present on residues serine 55 and serine 58. The SAP domain occupies 72–106 (INRMSKEELRAKLSEFKLETRGVKDVLKKRLKNYY). Residues 126–302 (ICIIDFEATC…DDSKNIARIA (177 aa)) enclose the Exonuclease domain. Residues aspartate 130 and glutamate 132 each contribute to the Mg(2+) site. The Proton acceptor role is filled by glutamate 132. 2 residues coordinate AMP: glutamate 132 and alanine 133. Residue aspartate 230 coordinates Mg(2+). The Proton acceptor role is filled by histidine 289. Histidine 289 contacts AMP. Aspartate 294 serves as a coordination point for Mg(2+).

In terms of assembly, identified in a histone pre-mRNA complex, at least composed of ERI1, LSM11, SLBP, SNRPB, SYNCRIP and YBX1. Binds to 40S and 60S ribosomal subunits and to 80S assembled ribosomes. Interacts in a cooperative manner with SLBP to the mature 3'-end of histone mRNAs. Found in a ternary complex with SLBP and the stem-loop structure of the 3'-end of histone mRNAs. The cofactor is Mg(2+). In terms of tissue distribution, widely expressed with high levels in spleen, thymus and testis (at protein level).

The protein resides in the cytoplasm. It localises to the nucleus. The protein localises to the nucleolus. The catalysed reaction is Exonucleolytic cleavage in the 3'- to 5'-direction to yield nucleoside 5'-phosphates.. With respect to regulation, although it can bind simultaneously with SLBP to the 3'-end of histone mRNA, the presence of SLBP prevents the exonuclease activity. In terms of biological role, RNA exonuclease that binds to the 3'-end of histone mRNAs and degrades them, suggesting that it plays an essential role in histone mRNA decay after replication. A 2' and 3'-hydroxyl groups at the last nucleotide of the histone 3'-end is required for efficient 3'-end histone mRNA exonuclease activity and degradation of RNA substrates. Also able to degrade the 3'-overhangs of short interfering RNAs (siRNAs) in vitro, suggesting a possible role as regulator of RNA interference (RNAi). Required for binding the 5'-ACCCA-3' sequence present in stem-loop structure. Able to bind other mRNAs. Required for 5.8S rRNA 3'-end processing. Also binds to 5.8s ribosomal RNA. Binds with high affinity to the stem-loop structure of replication-dependent histone pre-mRNAs. In vitro, does not have sequence specificity. In vitro, has weak DNA exonuclease activity. In vitro, shows biphasic kinetics such that there is rapid hydrolysis of the last three unpaired RNA nucleotides in the 39 flanking sequence followed by a much slower cleavage through the stem that occurs over a longer incubation period in the order of hours. ERI1-mediated RNA metabolism plays a key role in chondrogenesis. The polypeptide is 3'-5' exoribonuclease 1 (Eri1) (Mus musculus (Mouse)).